The chain runs to 584 residues: NADPH-dependent diflavin oxidoreductase 1 (584 aa).

The region spanning isoleucine 6–tyrosine 150 is the Flavodoxin-like domain. Residues serine 12–alanine 17, serine 59–glycine 62, cysteine 97–asparagine 106, and glutamate 132 each bind FMN. The FAD-binding FR-type domain occupies arginine 199–glutamine 436. FAD contacts are provided by residues arginine 343, arginine 373 to serine 376, and glycine 407 to serine 410. NADP(+) contacts are provided by residues threonine 448, serine 503–arginine 504, and lysine 509–glutamine 513. Residue tryptophan 584 participates in FAD binding.

Belongs to the NADPH-dependent diflavin oxidoreductase NDOR1 family. This sequence in the N-terminal section; belongs to the flavodoxin family. The protein in the C-terminal section; belongs to the flavoprotein pyridine nucleotide cytochrome reductase family. As to quaternary structure, interacts with dre2; as part of the cytosolic iron-sulfur (Fe-S) protein assembly (CIA) machinery. Requires FAD as cofactor. It depends on FMN as a cofactor.

The protein resides in the cytoplasm. It is found in the mitochondrion. It catalyses the reaction 2 oxidized [2Fe-2S]-[protein] + NADPH = 2 reduced [2Fe-2S]-[protein] + NADP(+) + H(+). Its function is as follows. NADPH-dependent reductase which is a central component of the cytosolic iron-sulfur (Fe-S) protein assembly (CIA) machinery. Transfers electrons from NADPH via its FAD and FMN prosthetic groups to the [2Fe-2S] cluster of dre2, another key component of the CIA machinery. In turn, this reduced cluster provides electrons for assembly of cytosolic iron-sulfur cluster proteins. Positively controls H(2)O(2)-induced cell death. The polypeptide is NADPH-dependent diflavin oxidoreductase 1 (Schizosaccharomyces pombe (strain 972 / ATCC 24843) (Fission yeast)).